The chain runs to 857 residues: MSGRDNRGAGGGGGGHQPLSNAMGKLKEKLTRVGDELGYHRVESNLSTSNTATSLDTILPEDPFLFPQVSPQRHPQNIVRTQLLLEDEPPLSFRPLLEDDDINEPPTQQQQRTPLRASGSLELTPLPPPPTSLEIREHRDRQQRGAQGDDLQRSKQSLKGSRVSFERRDTGNSNTNSNKAAESSDEDSFEEKRTGFQQQKATSVDHKGILKDLKHILANDNRRQFQAKKHVSLDVKGTRFLQDLLKESSSEEEFHKTRREFQGRKHQSLDPRVTFKLDKVLQGSSTDSDEEGEDAEHKRLIHRPKDITKPVIIDLKDLESESDEDFLTSRQHFQQQRSISTDSRKSRRLYEMDEMGNKRGENIRHAVPFVRQITEDGKPKLEVYRPTTNPIYIWTQVLAALSVSLGSLVVGFVSAYTSPALVSMTDRNITSFEVTQDAGSWVGGIMPLAALAGGITGGPLIEYLGRRNTILATAVPFIVSSLLIACAVNVAMVLCGRFLAGFCVGIASLSLPVYLGETVQPEVRGTLGLLPTAFGNIGILLCFVAGSFMNWSMLAFLGAALPVPFLILMFLIPETPRWFVGRGLEERARKALKWLRGKEADVEPELKGLMRSQADADRQASRNTMLELLKLNNLKPLSISLGLMFFQQFSGINAVIFYTVQIFKDAGSTIDGNLCTIIVGIVNFLATFIGIVLIDRAGRKILLYVSDIAMVLTLFVLGGFFYCKANGPDVSHLGWLPLTCFVIYILGFSLGFGPIPWLMMGEILPAKIRGSAASVATAFNWFCTFVVTKTFQDLTVAMGAHGAFWLFGAICFVGLFFVIIYVPETQGKTLEDIERKMMGRVRRMSSVANIKPLSFNM.

Disordered stretches follow at residues 1-27 (MSGR…GKLK) and 92-203 (SFRP…KATS). The Cytoplasmic portion of the chain corresponds to 1-392 (MSGRDNRGAG…VYRPTTNPIY (392 aa)). Residues 134 to 143 (EIREHRDRQQ) show a composition bias toward basic and acidic residues. Residues 171 to 181 (GNSNTNSNKAA) show a composition bias toward polar residues. Phosphoserine is present on residues Ser-248, Ser-249, Ser-250, Ser-320, and Ser-322. Positions 327–346 (LTSRQHFQQQRSISTDSRKS) are disordered. Residues 330-341 (RQHFQQQRSIST) are compositionally biased toward polar residues. The chain crosses the membrane as a helical span at residues 393-413 (IWTQVLAALSVSLGSLVVGFV). The Extracellular segment spans residues 414–440 (SAYTSPALVSMTDRNITSFEVTQDAGS). A glycan (N-linked (GlcNAc...) asparagine) is linked at Asn-428. A helical membrane pass occupies residues 441-461 (WVGGIMPLAALAGGITGGPLI). The Cytoplasmic portion of the chain corresponds to 462-473 (EYLGRRNTILAT). Residues 474-494 (AVPFIVSSLLIACAVNVAMVL) form a helical membrane-spanning segment. Residues 495–497 (CGR) lie on the Extracellular side of the membrane. Residues 498–518 (FLAGFCVGIASLSLPVYLGET) traverse the membrane as a helical segment. Topologically, residues 519-528 (VQPEVRGTLG) are cytoplasmic. Residues 529-549 (LLPTAFGNIGILLCFVAGSFM) traverse the membrane as a helical segment. Asn-550 carries an N-linked (GlcNAc...) asparagine glycan. The Extracellular portion of the chain corresponds to 550-552 (NWS). The chain crosses the membrane as a helical span at residues 553–573 (MLAFLGAALPVPFLILMFLIP). Residues 574 to 636 (ETPRWFVGRG…ELLKLNNLKP (63 aa)) lie on the Cytoplasmic side of the membrane. A helical membrane pass occupies residues 637-657 (LSISLGLMFFQQFSGINAVIF). The Extracellular portion of the chain corresponds to 658 to 673 (YTVQIFKDAGSTIDGN). A helical transmembrane segment spans residues 674-694 (LCTIIVGIVNFLATFIGIVLI). Residues 695-700 (DRAGRK) lie on the Cytoplasmic side of the membrane. A helical transmembrane segment spans residues 701-721 (ILLYVSDIAMVLTLFVLGGFF). The Extracellular segment spans residues 722 to 740 (YCKANGPDVSHLGWLPLTC). Residues 741-761 (FVIYILGFSLGFGPIPWLMMG) form a helical membrane-spanning segment. Residues 762 to 767 (EILPAK) lie on the Cytoplasmic side of the membrane. The helical transmembrane segment at 768 to 788 (IRGSAASVATAFNWFCTFVVT) threads the bilayer. Topologically, residues 789-801 (KTFQDLTVAMGAH) are extracellular. Residues 802-822 (GAFWLFGAICFVGLFFVIIYV) form a helical membrane-spanning segment. Topologically, residues 823–857 (PETQGKTLEDIERKMMGRVRRMSSVANIKPLSFNM) are cytoplasmic. Ser-845 and Ser-846 each carry phosphoserine.

This sequence belongs to the major facilitator superfamily. Sugar transporter (TC 2.A.1.1) family. Trehalose transporter subfamily.

The protein localises to the cell membrane. Its function is as follows. Low-capacity facilitative transporter for trehalose. Does not transport maltose, sucrose or lactose. Mediates the bidirectional transfer of trehalose. Responsible for the transport of trehalose synthesized in the fat body and the incorporation of trehalose into other tissues that require a carbon source, thereby regulating trehalose levels in the hemolymph. This chain is Facilitated trehalose transporter Tret1-1, found in Drosophila sechellia (Fruit fly).